We begin with the raw amino-acid sequence, 419 residues long: UDP-N-acetylglucosamine 1-carboxyvinyltransferase (419 aa).

22–23 (KN) is a phosphoenolpyruvate binding site. UDP-N-acetyl-alpha-D-glucosamine is bound at residue R91. C115 (proton donor) is an active-site residue. Residue C115 is modified to 2-(S-cysteinyl)pyruvic acid O-phosphothioketal. UDP-N-acetyl-alpha-D-glucosamine-binding positions include 120-124 (RPVDL), 160-163 (KVSV), D305, and V327.

Belongs to the EPSP synthase family. MurA subfamily.

It localises to the cytoplasm. The enzyme catalyses phosphoenolpyruvate + UDP-N-acetyl-alpha-D-glucosamine = UDP-N-acetyl-3-O-(1-carboxyvinyl)-alpha-D-glucosamine + phosphate. It functions in the pathway cell wall biogenesis; peptidoglycan biosynthesis. In terms of biological role, cell wall formation. Adds enolpyruvyl to UDP-N-acetylglucosamine. The protein is UDP-N-acetylglucosamine 1-carboxyvinyltransferase of Salmonella gallinarum (strain 287/91 / NCTC 13346).